A 189-amino-acid polypeptide reads, in one-letter code: Apolipoprotein D (189 aa).

Residues 1–20 (MVPVLLLLPALAGLFGAAEG) form the signal peptide. The residue at position 21 (Gln21) is a Pyrrolidone carboxylic acid. 2 cysteine pairs are disulfide-bonded: Cys28-Cys134 and Cys61-Cys185. N-linked (GlcNAc...) asparagine glycans are attached at residues Asn65 and Asn98.

It belongs to the calycin superfamily. Lipocalin family. Homodimer.

The protein localises to the secreted. APOD occurs in the macromolecular complex with lecithin-transport and binding of bilin. Appears to be able to transport a variety of ligands in a number of different contexts. The chain is Apolipoprotein D (APOD) from Bos taurus (Bovine).